Here is a 73-residue protein sequence, read N- to C-terminus: Large ribosomal subunit protein bL31 (73 aa).

Belongs to the bacterial ribosomal protein bL31 family. Type A subfamily. Part of the 50S ribosomal subunit. Contacts protein L9.

Binds the 23S rRNA and interacts with the tRNA in the E site. The protein is Large ribosomal subunit protein bL31 (rpmE) of Deinococcus radiodurans (strain ATCC 13939 / DSM 20539 / JCM 16871 / CCUG 27074 / LMG 4051 / NBRC 15346 / NCIMB 9279 / VKM B-1422 / R1).